An 805-amino-acid polypeptide reads, in one-letter code: Arginine/serine-rich protein PNISR (805 aa).

Positions 74–88 (PNNHGNFQGDSNFNR) are enriched in polar residues. Disordered stretches follow at residues 74–331 (PNNH…EEKE) and 382–805 (LTGL…SRSR). Pro residues-rich tracts occupy residues 100–115 (PPHP…PTPG) and 183–195 (YWQP…PAPP). The segment covering 197 to 210 (NRRERPSSFRDRQR) has biased composition (basic and acidic residues). A phosphoserine mark is found at Ser-204 and Ser-211. Lys-218 participates in a covalent cross-link: Glycyl lysine isopeptide (Lys-Gly) (interchain with G-Cter in SUMO2). Positions 237-276 (REGLEKMEREKQKKLEKERMEQQRSQLSKKEKKATEDAEG) form a coiled coil. A compositionally biased stretch (basic and acidic residues) spans 238 to 258 (EGLEKMEREKQKKLEKERMEQ). Phosphoserine occurs at positions 290, 304, 313, and 321. Residues 290 to 299 (SDEEEEDTEN) show a composition bias toward acidic residues. Positions 384–393 (GLGGLGGYGS) are enriched in gly residues. Positions 421-463 (QKQEAFWRKEKEQQLLHDKQMEEEKQQTERVTKEMNEFIHKEQ) are enriched in basic and acidic residues. The stretch at 429–461 (KEKEQQLLHDKQMEEEKQQTERVTKEMNEFIHK) forms a coiled coil. Ser-465 and Ser-467 each carry phosphoserine. Basic and acidic residues-rich tracts occupy residues 470–486 (EARE…KRTP) and 494–506 (EPKK…EKQG). Thr-485 carries the phosphothreonine modification. Lys-496 is covalently cross-linked (Glycyl lysine isopeptide (Lys-Gly) (interchain with G-Cter in SUMO2)). A compositionally biased stretch (low complexity) spans 508–550 (SRSGSSSSGSSSSNSRTSSTSSTVSSSSYSSSSGSSRTSSRSS). Basic residues-rich tracts occupy residues 551–579 (SPKR…YSRR), 587–598 (ARVKIRDRRRSN), and 607–639 (RRNR…SRDR). The span at 659 to 721 (EAKEQERKKE…KRKRESERTF (63 aa)) shows a compositional bias: basic and acidic residues. Residues 673–703 (IDKDRKKKDKEREREQDKRKEKQKREEKDFK) adopt a coiled-coil conformation. Lys-703 participates in a covalent cross-link: Glycyl lysine isopeptide (Lys-Gly) (interchain with G-Cter in SUMO2). At Ser-726 the chain carries Phosphoserine. Basic and acidic residues predominate over residues 732–753 (IRHDSRQDSKKSTTKDSKKHSG). Over residues 754-767 (SDSSGRSSSESPGS) the composition is skewed to low complexity. Basic residues-rich tracts occupy residues 771–781 (KKAKKPKHSRS) and 789–805 (RSGK…SRSR).

It belongs to the splicing factor SR family. In terms of assembly, interacts with PNN. Expressed in heart, skeletal muscle, thymus, spleen, kidney, liver, placenta and leukocytes.

It localises to the nucleus speckle. This chain is Arginine/serine-rich protein PNISR (PNISR), found in Homo sapiens (Human).